Here is a 764-residue protein sequence, read N- to C-terminus: Complement factor B (764 aa).

Positions 1-25 are cleaved as a signal peptide; it reads MGSNLSPQLCLMPFILGLLSGGVTT. 3 Sushi domains span residues 35 to 100, 101 to 160, and 163 to 220; these read GSCS…ECRA, IHCP…ICDN, and GYCS…SCQD. 6 disulfides stabilise this stretch: Cys37-Cys76, Cys62-Cys98, Cys103-Cys145, Cys131-Cys158, Cys165-Cys205, and Cys191-Cys218. Asn122 and Asn142 each carry an N-linked (GlcNAc...) asparagine glycan. Residues 270–469 form the VWFA domain; sequence NIYLVLDGSD…NLEDVFYQMI (200 aa). Mg(2+) contacts are provided by Ser278 and Ser280. Mn(2+)-binding residues include Ser278 and Ser280. Asn285 is a glycosylation site (N-linked (GlcNAc...) asparagine). An N-linked (Glc) (glycation) lysine glycan is attached at Lys291. Thr353 contributes to the Mg(2+) binding site. Thr353 contacts Mn(2+). An N-linked (GlcNAc...) asparagine glycan is attached at Asn378. The Peptidase S1 domain maps to 477–757; sequence LCGMVWEHRK…VLPWLKEKLQ (281 aa). Disulfide bonds link Cys478-Cys596, Cys511-Cys527, Cys599-Cys615, Cys656-Cys682, and Cys695-Cys725. Catalysis depends on charge relay system residues His526 and Asp576. The active-site Charge relay system is Ser699.

Belongs to the peptidase S1 family. In terms of assembly, monomer. Interacts with complement C3b; this interaction is dependent on the presence of Mg(2+). Catalytic component of the C3 convertase of the alternative complement pathway, also named C3bBb, composed of complement factor B Bb and complement C3b. Catalytic component of the C5 convertase of the alternative complement pathway, also named C3bBb3b, composed of complement factor B Bb and additional molecules of complement C3b. Interacts to CFP; this interaction contributes to the stabilization of the active C3-convertase enzyme complex. The cofactor is Mg(2+). Mn(2+) serves as cofactor. Cleaved by CFD following activation of the alternative complement system, generating Ba and Bb chains. Cleavage and activation takes place when CFB is already associated with complement C3b.

The protein localises to the secreted. The protein resides in the cell surface. It carries out the reaction Cleavage of Arg-|-Ser bond in complement component C3 alpha-chain to yield C3a and C3b, and Arg-|-Xaa bond in complement component C5 alpha-chain to yield C5a and C5b.. Its function is as follows. Precursor of the catalytic component of the C3 and C5 convertase complexes of the alternative pathway of the complement system, a cascade of proteins that leads to phagocytosis and breakdown of pathogens and signaling that strengthens the adaptive immune system. The alternative complement pathway acts as an amplification loop that enhances other complement pathways (classical, lectin and GZMK) by promoting formation of additional C3 and C5 convertases. CFB is cleaved and activated by CFD to generate Ba and Bb chains; Bb chain constituting the catalytic component of the C3 and C5 convertases. Serine protease component of the complement C3 and C5 convertase complexes of the alternative complement pathway. Following cleavage and activation by factor D (CFD), forms the C3 convertase together with complement C3b. As part of the C3 convertase, cleaves and activates C3 into C3a anaphylatoxin and C3b opsonin, the next components of the complement pathways. When an additional complement C3b molecule binds to the C3 convertase, forms the C5 convertase, which cleaves and activates C5 into C5a anaphylatoxin and C5b component of the membrane attack complex. Functionally, involved in proliferation and differentiation of preactivated B-lymphocytes, rapid spreading of peripheral blood monocytes, stimulation of lymphocyte blastogenesis and lysis of erythrocytes. In Homo sapiens (Human), this protein is Complement factor B.